A 162-amino-acid polypeptide reads, in one-letter code: Meiosis-specific protein HED1 (162 aa).

Residues 67–124 (KNLSENTGGGSPNGGAYLDAKKGVREQDQYQGGPSKELDRLQPPPSMKKSPPRKKKSL) are disordered. Over residues 85–94 (DAKKGVREQD) the composition is skewed to basic and acidic residues.

As to quaternary structure, interacts with RAD51.

Its subcellular location is the nucleus. The protein resides in the chromosome. In terms of biological role, involved in regulation of meiotic recombination and repair of DNA damage. Inhibits RAD51-mediated recombination when the meiotic recombination machinery is impaired. The protein is Meiosis-specific protein HED1 (HED1) of Saccharomyces cerevisiae (strain ATCC 204508 / S288c) (Baker's yeast).